The sequence spans 157 residues: Urease accessory protein UreE (157 aa).

This sequence belongs to the UreE family.

The protein resides in the cytoplasm. Involved in urease metallocenter assembly. Binds nickel. Probably functions as a nickel donor during metallocenter assembly. The protein is Urease accessory protein UreE of Corynebacterium glutamicum (strain ATCC 13032 / DSM 20300 / JCM 1318 / BCRC 11384 / CCUG 27702 / LMG 3730 / NBRC 12168 / NCIMB 10025 / NRRL B-2784 / 534).